An 89-amino-acid polypeptide reads, in one-letter code: MEYQYPLDYDWSNEEMVTIVKFYEAIEKAYEKGIIREELMGLYRRFKEIVPSKAEEKKIDKEFQEVSGYSIYRAIQRAKEVEEQKVVKI.

This sequence belongs to the UPF0223 family.

The sequence is that of UPF0223 protein BCG9842_B1176 from Bacillus cereus (strain G9842).